A 180-amino-acid polypeptide reads, in one-letter code: Ribosome-recycling factor (180 aa).

This sequence belongs to the RRF family.

The protein localises to the cytoplasm. Responsible for the release of ribosomes from messenger RNA at the termination of protein biosynthesis. May increase the efficiency of translation by recycling ribosomes from one round of translation to another. This is Ribosome-recycling factor from Chlamydia caviae (strain ATCC VR-813 / DSM 19441 / 03DC25 / GPIC) (Chlamydophila caviae).